Reading from the N-terminus, the 332-residue chain is Anthranilate phosphoribosyltransferase (332 aa).

5-phospho-alpha-D-ribose 1-diphosphate-binding positions include Gly78, 81 to 82 (GD), Thr86, 88 to 91 (NVST), 106 to 114 (KHGNRAASS), and Ala118. Residue Gly78 coordinates anthranilate. Ser90 provides a ligand contact to Mg(2+). Asn109 contributes to the anthranilate binding site. Arg164 contacts anthranilate. Mg(2+)-binding residues include Asp223 and Glu224.

It belongs to the anthranilate phosphoribosyltransferase family. In terms of assembly, homodimer. It depends on Mg(2+) as a cofactor.

The enzyme catalyses N-(5-phospho-beta-D-ribosyl)anthranilate + diphosphate = 5-phospho-alpha-D-ribose 1-diphosphate + anthranilate. It functions in the pathway amino-acid biosynthesis; L-tryptophan biosynthesis; L-tryptophan from chorismate: step 2/5. Its function is as follows. Catalyzes the transfer of the phosphoribosyl group of 5-phosphorylribose-1-pyrophosphate (PRPP) to anthranilate to yield N-(5'-phosphoribosyl)-anthranilate (PRA). The protein is Anthranilate phosphoribosyltransferase of Sphingopyxis alaskensis (strain DSM 13593 / LMG 18877 / RB2256) (Sphingomonas alaskensis).